We begin with the raw amino-acid sequence, 168 residues long: Photosystem I assembly protein Ycf3 (168 aa).

TPR repeat units follow at residues 35-68 (AFTY…EIDP), 72-105 (SYIL…NPFL), and 120-153 (GEQA…TPGN).

It belongs to the Ycf3 family.

Its subcellular location is the plastid. It localises to the chloroplast thylakoid membrane. In terms of biological role, essential for the assembly of the photosystem I (PSI) complex. May act as a chaperone-like factor to guide the assembly of the PSI subunits. This chain is Photosystem I assembly protein Ycf3, found in Ranunculus macranthus (Large buttercup).